The following is a 213-amino-acid chain: rRNA N(6)-adenosine-methyltransferase Mettl5 (213 aa).

S-adenosyl-L-methionine is bound by residues Gln-28, Thr-31, Gly-59, Cys-62, and 108–109; that span reads DV.

This sequence belongs to the methyltransferase superfamily. PrmA family. In terms of assembly, heterodimer; heterodimerizes with Trmt112. In terms of tissue distribution, enriched in the brain.

The protein resides in the cytoplasm. It catalyses the reaction adenosine in rRNA + S-adenosyl-L-methionine = N(6)-methyladenosine in rRNA + S-adenosyl-L-homocysteine + H(+). Catalytic subunit of a heterodimer with Trmt112, which specifically methylates the 6th position of adenine in 18S rRNA. In Drosophila melanogaster (Fruit fly), this protein is rRNA N(6)-adenosine-methyltransferase Mettl5.